Consider the following 400-residue polypeptide: Inosine-5'-monophosphate dehydrogenase (400 aa).

Over residues 96 to 116 (KNESTPDQNLDKESTDGKDTK) the composition is skewed to basic and acidic residues. The interval 96 to 125 (KNESTPDQNLDKESTDGKDTKSNNNIDAYS) is disordered. NAD(+) is bound by residues Asp-163 and 212 to 214 (GIG). The K(+) site is built by Gly-214 and Gly-216. Ser-217 contacts IMP. Cys-219 lines the K(+) pocket. The active-site Thioimidate intermediate is Cys-219. Residues 252 to 254 (DGG), 275 to 276 (GS), and 299 to 303 (YRGMG) contribute to the IMP site. Arg-315 functions as the Proton acceptor in the catalytic mechanism. An IMP-binding site is contributed by Glu-329. K(+)-binding residues include Glu-383, Ser-384, and His-385.

The protein belongs to the IMPDH/GMPR family. Homotetramer. It depends on K(+) as a cofactor.

It is found in the cytoplasm. The enzyme catalyses IMP + NAD(+) + H2O = XMP + NADH + H(+). Its pathway is purine metabolism; XMP biosynthesis via de novo pathway; XMP from IMP: step 1/1. With respect to regulation, mycophenolic acid (MPA) is a non-competitive inhibitor that prevents formation of the closed enzyme conformation by binding to the same site as the amobile flap. In contrast, mizoribine monophosphate (MZP) is a competitive inhibitor that induces the closed conformation. MPA is a potent inhibitor of mammalian IMPDHs but a poor inhibitor of the bacterial enzymes. MZP is a more potent inhibitor of bacterial IMPDH. Resistant to mycophenolic acid (MPA) inhibition. Functionally, catalyzes the conversion of inosine 5'-phosphate (IMP) to xanthosine 5'-phosphate (XMP), the first committed and rate-limiting step in the de novo synthesis of guanine nucleotides, and therefore plays an important role in the regulation of cell growth. The polypeptide is Inosine-5'-monophosphate dehydrogenase (Cryptosporidium parvum).